Here is a 161-residue protein sequence, read N- to C-terminus: Protein-export protein SecB (161 aa).

The protein belongs to the SecB family. In terms of assembly, homotetramer, a dimer of dimers. One homotetramer interacts with 1 SecA dimer.

The protein localises to the cytoplasm. One of the proteins required for the normal export of preproteins out of the cell cytoplasm. It is a molecular chaperone that binds to a subset of precursor proteins, maintaining them in a translocation-competent state. It also specifically binds to its receptor SecA. This is Protein-export protein SecB from Pseudomonas putida (strain ATCC 700007 / DSM 6899 / JCM 31910 / BCRC 17059 / LMG 24140 / F1).